We begin with the raw amino-acid sequence, 412 residues long: Peptidyl-prolyl cis-trans isomerase FKBP8 (412 aa).

The disordered stretch occupies residues 1-68 (MASCAEPSEP…GQPPAEEAEQ (68 aa)). Acidic residues predominate over residues 22 to 50 (EDFEVLDGVEDAEGEEEEEEEEEEEDDLS). Residues 120-204 (GQVVTVHLQT…CLEVTLKTAV (85 aa)) form the PPIase FKBP-type domain. Ca(2+) is bound by residues Asp149 and Asp151. Residues 221-254 (ANRKRECGNAHYQRADFVLAANSYDLAIKAITSS) form a TPR 1 repeat. Residues Lys249, Lys271, Lys273, and Lys284 each participate in a glycyl lysine isopeptide (Lys-Gly) (interchain with G-Cter in ubiquitin) cross-link. TPR repeat units follow at residues 272-305 (VKCL…QPDN) and 306-339 (IKAL…EPSN). A Phosphoserine modification is found at Ser296. Glycyl lysine isopeptide (Lys-Gly) (interchain with G-Cter in ubiquitin) cross-links involve residues Lys307, Lys314, Lys334, Lys340, Lys348, Lys351, and Lys352. A helical membrane pass occupies residues 390–410 (WLFGATAVALGGVALSVVIAA).

As to quaternary structure, homomultimers or heteromultimers (Potential). Forms heterodimer with calmodulin. When activated by calmodulin and calcium, interacts with the BH4 domain of BCL2 and weakly with BCL2L1/BCLX isoform Bcl-X(L). Does not bind and inhibit calcineurin. Interacts with ZFYVE27; may negatively regulate ZFYVE27 phosphorylation. In terms of assembly, (Microbial infection) Interacts with hepatitis C/HCV protein NS5A. It depends on Ca(2+) as a cofactor. In terms of processing, ubiquitinated by PRKN during mitophagy, leading to its degradation and enhancement of mitophagy. Deubiquitinated by USP30. As to expression, widely expressed. Highest levels seen in the brain. Highly abundant in the retina.

The protein localises to the mitochondrion. It is found in the mitochondrion membrane. The enzyme catalyses [protein]-peptidylproline (omega=180) = [protein]-peptidylproline (omega=0). Constitutively inactive PPiase, which becomes active when bound to calmodulin and calcium. Seems to act as a chaperone for BCL2, targets it to the mitochondria and modulates its phosphorylation state. The BCL2/FKBP8/calmodulin/calcium complex probably interferes with the binding of BCL2 to its targets. The active form of FKBP8 may therefore play a role in the regulation of apoptosis. Involved in the inhibition of viral infection by influenza A viruses (IAV). This Homo sapiens (Human) protein is Peptidyl-prolyl cis-trans isomerase FKBP8 (FKBP8).